A 96-amino-acid polypeptide reads, in one-letter code: UPF0235 protein CKO_04329 (96 aa).

It belongs to the UPF0235 family.

This Citrobacter koseri (strain ATCC BAA-895 / CDC 4225-83 / SGSC4696) protein is UPF0235 protein CKO_04329.